We begin with the raw amino-acid sequence, 114 residues long: Probable prefoldin subunit 2 (114 aa).

Belongs to the prefoldin subunit beta family. Heterohexamer of two PFD-alpha type and four PFD-beta type subunits.

In terms of biological role, binds specifically to cytosolic chaperonin (c-CPN) and transfers target proteins to it. Binds to nascent polypeptide chain and promotes folding in an environment in which there are many competing pathways for nonnative proteins. The sequence is that of Probable prefoldin subunit 2 from Schizosaccharomyces pombe (strain 972 / ATCC 24843) (Fission yeast).